The following is a 509-amino-acid chain: Anaerobic nitric oxide reductase transcription regulator NorR (509 aa).

Position 56 is a 4-aspartylphosphate (D56). The Sigma-54 factor interaction domain maps to 186 to 415 (MIGRSPAMDR…LEHAIHRAAV (230 aa)). Residues 214 to 221 (GETGVGKE) and 277 to 286 (ADKGTLFLDE) contribute to the ATP site. The segment at residues 484–503 (WAATARALEMDGGNLHRLAR) is a DNA-binding region (H-T-H motif).

The protein operates within nitrogen metabolism; nitric oxide reduction. Required for the expression of anaerobic nitric oxide (NO) reductase, acts as a transcriptional activator for at least the norVW operon. Activation also requires sigma-54. The protein is Anaerobic nitric oxide reductase transcription regulator NorR of Aeromonas salmonicida (strain A449).